Consider the following 203-residue polypeptide: Cytochrome c biogenesis ATP-binding export protein CcmA (203 aa).

The ABC transporter domain maps to 2–203 (LEALDLAGVR…KTSQTVRMGA (202 aa)). 34–41 (GENGSGKT) lines the ATP pocket.

It belongs to the ABC transporter superfamily. CcmA exporter (TC 3.A.1.107) family. The complex is composed of two ATP-binding proteins (CcmA) and two transmembrane proteins (CcmB).

It is found in the cell inner membrane. The enzyme catalyses heme b(in) + ATP + H2O = heme b(out) + ADP + phosphate + H(+). Functionally, part of the ABC transporter complex CcmAB involved in the biogenesis of c-type cytochromes; once thought to export heme, this seems not to be the case, but its exact role is uncertain. Responsible for energy coupling to the transport system. This is Cytochrome c biogenesis ATP-binding export protein CcmA from Pseudomonas aeruginosa.